A 126-amino-acid chain; its full sequence is Glycine cleavage system H protein (126 aa).

Positions Thr-21–Lys-103 constitute a Lipoyl-binding domain. An N6-lipoyllysine modification is found at Lys-62.

It belongs to the GcvH family. As to quaternary structure, the glycine cleavage system is composed of four proteins: P, T, L and H. The cofactor is (R)-lipoate.

Its function is as follows. The glycine cleavage system catalyzes the degradation of glycine. The H protein shuttles the methylamine group of glycine from the P protein to the T protein. The chain is Glycine cleavage system H protein from Vibrio vulnificus (strain CMCP6).